A 404-amino-acid chain; its full sequence is Adenosylhomocysteinase (404 aa).

Substrate-binding residues include aspartate 114 and glutamate 139. 140–142 (TTT) is an NAD(+) binding site. Residues lysine 169 and aspartate 173 each contribute to the substrate site. Residues asparagine 174, 203 to 208 (GYGWCG), glutamate 226, asparagine 261, 282 to 284 (AGH), and asparagine 329 each bind NAD(+).

This sequence belongs to the adenosylhomocysteinase family. NAD(+) is required as a cofactor.

The protein localises to the cytoplasm. It carries out the reaction S-adenosyl-L-homocysteine + H2O = L-homocysteine + adenosine. It participates in amino-acid biosynthesis; L-homocysteine biosynthesis; L-homocysteine from S-adenosyl-L-homocysteine: step 1/1. Functionally, may play a key role in the regulation of the intracellular concentration of adenosylhomocysteine. This is Adenosylhomocysteinase from Thermotoga maritima (strain ATCC 43589 / DSM 3109 / JCM 10099 / NBRC 100826 / MSB8).